Consider the following 344-residue polypeptide: Phosphate acyltransferase (344 aa).

It belongs to the PlsX family. As to quaternary structure, homodimer. Probably interacts with PlsY.

The protein localises to the cytoplasm. The enzyme catalyses a fatty acyl-[ACP] + phosphate = an acyl phosphate + holo-[ACP]. The protein operates within lipid metabolism; phospholipid metabolism. Catalyzes the reversible formation of acyl-phosphate (acyl-PO(4)) from acyl-[acyl-carrier-protein] (acyl-ACP). This enzyme utilizes acyl-ACP as fatty acyl donor, but not acyl-CoA. This chain is Phosphate acyltransferase, found in Cyanothece sp. (strain PCC 7425 / ATCC 29141).